The sequence spans 298 residues: Tyrosine recombinase XerC (298 aa).

The Core-binding (CB) domain occupies 2–88; that stretch reads TDLHTDVERY…ALRSFFDWLV (87 aa). A Tyr recombinase domain is found at 109-288; sequence HLPKNIDVDD…DFQHLASVYD (180 aa). Catalysis depends on residues Arg-148, Lys-172, His-240, Arg-243, and His-266. The active-site O-(3'-phospho-DNA)-tyrosine intermediate is the Tyr-275.

Belongs to the 'phage' integrase family. XerC subfamily. As to quaternary structure, forms a cyclic heterotetrameric complex composed of two molecules of XerC and two molecules of XerD, in which XerC interacts with XerD via its C-terminal region, XerD interacts with XerC via its C-terminal region and so on.

Its subcellular location is the cytoplasm. Its activity is regulated as follows. FtsK may regulate the catalytic switch between XerC and XerD in the heterotetrameric complex during the two steps of the recombination process. In terms of biological role, site-specific tyrosine recombinase, which acts by catalyzing the cutting and rejoining of the recombining DNA molecules. Binds cooperatively to specific DNA consensus sequences that are separated from XerD binding sites by a short central region, forming the heterotetrameric XerC-XerD complex that recombines DNA substrates. The complex is essential to convert dimers of the bacterial chromosome into monomers to permit their segregation at cell division. It also contributes to the segregational stability of plasmids. In the complex XerC specifically exchanges the top DNA strands. This Escherichia coli O6:K15:H31 (strain 536 / UPEC) protein is Tyrosine recombinase XerC.